The sequence spans 201 residues: Indolepyruvate oxidoreductase subunit IorB (201 aa).

In terms of assembly, heterodimer of the IorA and IorB subunits.

The enzyme catalyses indole-3-pyruvate + 2 oxidized [2Fe-2S]-[ferredoxin] + CoA = (indol-3-yl)acetyl-CoA + 2 reduced [2Fe-2S]-[ferredoxin] + CO2 + H(+). Catalyzes the ferredoxin-dependent oxidative decarboxylation of arylpyruvates. The sequence is that of Indolepyruvate oxidoreductase subunit IorB (iorB) from Archaeoglobus fulgidus (strain ATCC 49558 / DSM 4304 / JCM 9628 / NBRC 100126 / VC-16).